The following is a 323-amino-acid chain: Small ribosomal subunit protein uS9m (323 aa).

Positions 298–323 (TRDARKVERKKPGKVKARKSPTWVKR) are disordered. The segment covering 304–323 (VERKKPGKVKARKSPTWVKR) has biased composition (basic residues).

This sequence belongs to the universal ribosomal protein uS9 family.

Its subcellular location is the mitochondrion. The polypeptide is Small ribosomal subunit protein uS9m (MRPS9) (Debaryomyces hansenii (strain ATCC 36239 / CBS 767 / BCRC 21394 / JCM 1990 / NBRC 0083 / IGC 2968) (Yeast)).